The sequence spans 303 residues: Vesicle-trafficking protein SEC22c (303 aa).

Topologically, residues 1 to 183 (MSVIFFACVV…EPAPNFRMEP (183 aa)) are cytoplasmic. Positions 8 to 119 (CVVRVRDGLP…YAFLEFDSII (112 aa)) constitute a Longin domain. The chain crosses the membrane as a helical span at residues 184-204 (VTALGILSLILNIMCAALNLI). Over 205–223 (RGVHLAEHSLQVAHEEIGN) the chain is Lumenal. Residues 224–244 (ILAFLVPFVACIFQCYLYLFY) form a helical membrane-spanning segment. Residues 245-248 (SPAR) lie on the Cytoplasmic side of the membrane. Residues 249-269 (TMKVVLMLLFICLGNMYLHGL) traverse the membrane as a helical segment. A topological domain (lumenal) is located at residue arginine 270. The helical transmembrane segment at 271–291 (NLWQILFHIGVAFLSSYQILT) threads the bilayer. The Cytoplasmic segment spans residues 292–303 (RQLQEKQSDCGV).

The protein belongs to the synaptobrevin family. Ubiquitously expressed.

It is found in the endoplasmic reticulum membrane. May be involved in vesicle transport between the ER and the Golgi complex. The polypeptide is Vesicle-trafficking protein SEC22c (SEC22C) (Homo sapiens (Human)).